A 276-amino-acid polypeptide reads, in one-letter code: Urease accessory protein UreD (276 aa).

The protein belongs to the UreD family. UreD, UreF and UreG form a complex that acts as a GTP-hydrolysis-dependent molecular chaperone, activating the urease apoprotein by helping to assemble the nickel containing metallocenter of UreC. The UreE protein probably delivers the nickel.

The protein resides in the cytoplasm. Required for maturation of urease via the functional incorporation of the urease nickel metallocenter. In Polaromonas sp. (strain JS666 / ATCC BAA-500), this protein is Urease accessory protein UreD.